A 188-amino-acid polypeptide reads, in one-letter code: Large ribosomal subunit protein eL18 (188 aa).

Residue K119 forms a Glycyl lysine isopeptide (Lys-Gly) (interchain with G-Cter in SUMO2) linkage. S130 is modified (phosphoserine). Positions 150–188 (RHFGKAPGTPHSHTKPYVRSKGRKFERARGRRASRGYKN) are disordered. Residue T158 is modified to Phosphothreonine. Basic residues-rich tracts occupy residues 161–171 (SHTKPYVRSKG) and 178–188 (RGRRASRGYKN). Residue K164 forms a Glycyl lysine isopeptide (Lys-Gly) (interchain with G-Cter in SUMO2) linkage.

This sequence belongs to the eukaryotic ribosomal protein eL18 family. In terms of assembly, component of the large ribosomal subunit.

Its subcellular location is the cytoplasm. The protein localises to the cytosol. The protein resides in the rough endoplasmic reticulum. Functionally, component of the large ribosomal subunit. The ribosome is a large ribonucleoprotein complex responsible for the synthesis of proteins in the cell. The sequence is that of Large ribosomal subunit protein eL18 (RPL18) from Bos taurus (Bovine).